A 253-amino-acid chain; its full sequence is 5-oxoprolinase subunit A (253 aa).

It belongs to the LamB/PxpA family. In terms of assembly, forms a complex composed of PxpA, PxpB and PxpC.

The catalysed reaction is 5-oxo-L-proline + ATP + 2 H2O = L-glutamate + ADP + phosphate + H(+). Its function is as follows. Catalyzes the cleavage of 5-oxoproline to form L-glutamate coupled to the hydrolysis of ATP to ADP and inorganic phosphate. This Bacillus cereus (strain ZK / E33L) protein is 5-oxoprolinase subunit A.